A 718-amino-acid polypeptide reads, in one-letter code: MAGGPGPGDPAVPGAQHFLYEVPPWVMCRFYKVMDALEPADWCQFAALIVRDQTELRLCERSGQRTASVLWPWINRNARVADLVRILTHLQLLRARDIITAWHPPAPLLPPSTTSLTPSSISAPSEAAVPGHRKLPSLASTFLSPAFPGSQTHSDPELCPGPSPAAHQPPLPSPAPSSTKPSPESPMSLLPGAPSSSFCWPLHEICQGTHDFSEELKIGEGGFGCVYRAVMRNTVYAVKRLKEEADLEWTTVKQSFQTEVQQLSRFRHPNIVDFAGYCAQSGFYCLVYGFLPNGSLEDRLHVQTQAWPPLSWPQRLDILLGTARAIQFLHQDSPSLIHGDVKSSNVLLDERLMPKLGDFGLARLSRFTGANPGQSSSVARTRTVRGTLAYLPEEYVKTGRLAVDTDTFSFGVVLLETLAGQRAVRMHGAQPKYLKDLVEEEAEEAGVTLKGTQTAVQGGPAADTWAALVAAQIYKKHLDPRPGPCPPQLGLALGQLACCCLHRRAKRRPPMTQVYQTLEELQVVVAGPCLELEAASRSPPSPQENSYVSTSGSALSRASPWQPLAAPLGAQAQATDWPQKGANQPVESDESVSDLSAALHSWHLSPSCPAGPGAPSWVPAPFGQAACTQGGAARESSCGSGPGLQPTAVEGPLLGSSMSSRPPQIVINPARRKMLQKLALYEDGVLDSLQLLSSSSLPDSGQDLQDRQGPEERDEFRS.

Positions 27–106 (MCRFYKVMDA…DIITAWHPPA (80 aa)) constitute a Death domain. A Phosphothreonine; by PKC/PRKCI modification is found at threonine 66. The segment at 110-211 (PPSTTSLTPS…LHEICQGTHD (102 aa)) is proST region. Lysine 134 is covalently cross-linked (Glycyl lysine isopeptide (Lys-Gly) (interchain with G-Cter in ubiquitin)). The disordered stretch occupies residues 146–188 (AFPGSQTHSDPELCPGPSPAAHQPPLPSPAPSSTKPSPESPMS). The segment covering 159-175 (CPGPSPAAHQPPLPSPA) has biased composition (pro residues). Residues 176-188 (PSSTKPSPESPMS) show a composition bias toward low complexity. Lysine 180 is covalently cross-linked (Glycyl lysine isopeptide (Lys-Gly) (interchain with G-Cter in ubiquitin)). Threonine 209 bears the Phosphothreonine; by IRAK4 mark. A Protein kinase domain is found at 212–521 (FSEELKIGEG…TQVYQTLEEL (310 aa)). ATP is bound by residues 218-226 (IGEGGFGCV) and lysine 239. The active-site Proton acceptor is the aspartate 340. ATP contacts are provided by residues 342–345 (KSSN) and aspartate 358. Phosphoserine is present on serine 375. A Phosphothreonine modification is found at threonine 387. Residues 534 to 554 (AASRSPPSPQENSYVSTSGSA) form a disordered region. Over residues 543 to 554 (QENSYVSTSGSA) the composition is skewed to polar residues. Serine 556 bears the Phosphoserine mark. Disordered regions lie at residues 569–594 (GAQAQATDWPQKGANQPVESDESVSD), 631–662 (GAARESSCGSGPGLQPTAVEGPLLGSSMSSRP), and 692–718 (LSSSSLPDSGQDLQDRQGPEERDEFRS). A compositionally biased stretch (low complexity) spans 692 to 703 (LSSSSLPDSGQD). Residues 704–718 (LQDRQGPEERDEFRS) show a composition bias toward basic and acidic residues.

This sequence belongs to the protein kinase superfamily. TKL Ser/Thr protein kinase family. Pelle subfamily. Homodimer. Forms a complex with TRAF6, PELI1, IRAK4 and MYD88. Direct binding of SMAD6 to PELI1 prevents complex formation and hence negatively regulates IL1R-TLR signaling and eventually NF-kappa-B-mediated gene expression. The TRAF6-PELI1-IRAK1-IRAK4-MYD88 complex recruits MAP3K7/TAK1, TAB1 and TAB2 to mediate NF-kappa-B activation. Interaction with MYD88 recruits IRAK1 to the stimulated receptor complex. Interacts with TOLLIP; this interaction occurs in the cytosol prior to receptor activation. Interacts with IL1RL1. Interacts (when polyubiquitinated) with IKBKG/NEMO. Interacts with RSAD2/viperin. Interacts with IRAK1BP1. Interacts with PELI2. Interacts with ZC3H12A; this interaction increases the interaction between ZC3H12A and IKBKB/IKKB. Interacts with IRAK4. Interacts with PELI3. Interacts with PELI1 and TRAF6. Interacts with INAVA; the interaction takes place upon PRR stimulation. Interacts (via C-terminus) with NFATC4 (via N-terminus). Mg(2+) is required as a cofactor. Following recruitment on the activated receptor complex, phosphorylated on Thr-209, probably by IRAK4, resulting in a conformational change of the kinase domain, allowing further phosphorylations to take place. Thr-387 phosphorylation in the activation loop is required to achieve full enzymatic activity. In terms of processing, polyubiquitinated by TRAF6 after cell stimulation with IL-1-beta by PELI1, PELI2 and PELI3. Polyubiquitination occurs with polyubiquitin chains linked through 'Lys-63'. Ubiquitination promotes interaction with NEMO/IKBKG. Also sumoylated; leading to nuclear translocation.

Its subcellular location is the cytoplasm. It is found in the nucleus. The protein resides in the lipid droplet. The enzyme catalyses L-seryl-[protein] + ATP = O-phospho-L-seryl-[protein] + ADP + H(+). It catalyses the reaction L-threonyl-[protein] + ATP = O-phospho-L-threonyl-[protein] + ADP + H(+). Functionally, serine/threonine-protein kinase that plays a critical role in initiating innate immune response against foreign pathogens. Involved in Toll-like receptor (TLR) and IL-1R signaling pathways. Is rapidly recruited by MYD88 to the receptor-signaling complex upon TLR activation. Association with MYD88 leads to IRAK1 phosphorylation by IRAK4 and subsequent autophosphorylation and kinase activation. Phosphorylates E3 ubiquitin ligases Pellino proteins (PELI1, PELI2 and PELI3) to promote pellino-mediated polyubiquitination of IRAK1. Then, the ubiquitin-binding domain of IKBKG/NEMO binds to polyubiquitinated IRAK1 bringing together the IRAK1-MAP3K7/TAK1-TRAF6 complex and the NEMO-IKKA-IKKB complex. In turn, MAP3K7/TAK1 activates IKKs (CHUK/IKKA and IKBKB/IKKB) leading to NF-kappa-B nuclear translocation and activation. Alternatively, phosphorylates TIRAP to promote its ubiquitination and subsequent degradation. Phosphorylates the interferon regulatory factor 7 (IRF7) to induce its activation and translocation to the nucleus, resulting in transcriptional activation of type I IFN genes, which drive the cell in an antiviral state. When sumoylated, translocates to the nucleus and phosphorylates STAT3. The polypeptide is Interleukin-1 receptor-associated kinase 1 (IRAK1) (Bos taurus (Bovine)).